An 892-amino-acid chain; its full sequence is MPNFTGNTRPDPTLFEPAAFAKWIDTSEAPLLLLRSFLKEGIENLKQRFLTGTSAAELLPLHAWLVDQILVQACRLHTKKCPERVALVAVGGYGRGTLHPYSDIDILLLLTEETDSILQNSIGHFISFLWDTGLEMGHSVRTVAECQQAARDDLSFITSLMEARLLFGPELLFKNLQTAIAPEQIWNSRQFFLAKQAEQITRHHKYHDTAYNLEPNLKEGPGGLRDIQMIQWVSKRYFNTWSFDSLLQHDFLTVSERKELLESQSFLWQLRYGLHTLTGRREDRLLFDHQIALAKQLGYHDQGPHLAVEQLMKDYYRTAENTGRLNEMLLQLLEERILLVDAKVHVRPINERFQARNGFLEVINPSVFKHTPSALLEVFLLLQQHPEIKGVRASTIRLIREHRHLIDDNFRADSFNRALFMEIMRQSRGITRELRRMNKYGILGAYLPVFGKIVGQMQYDMFHAYTVDEHTLFLIHNLRRFALPKYAQELPLCSEIFQRISKPELLYLAGLFHDIAKGRGGDHSKLGAKDALRFCLYHGLSRDDSRLVAWLVAHHLLMSMTAQRRDINDPKVIQRFAREVGDERRLNHLYLLTAADIRATNPNLWNSWKDALLNKLYTATQQALRQGLEYPVDKKEHIRDIQNEARQALLKDGWTEQKLDILWSQIDADYFLRHTPNEIRWHIKALAQKEPHDGAPRILVRIHNQEPGTMEVFIYARAHALIFTVTTRTMAQLDLDVLDARIITTGHGFVLESFVVREAATIRAEADLEFRLQEIQEVLTQRLTQPDRAPPYRPGFIPRKLKLFKFPTTITFTKDRRNQCTVMELTTNNWPGLLSRVCRALASCQVRLVNAKITTLGTQVVDVFFICNQQDKPLTPEQQQQLKEAIYTYLER.

The segment at 1-348 (MPNFTGNTRP…LVDAKVHVRP (348 aa)) is uridylyltransferase. Residues 349–710 (INERFQARNG…RIHNQEPGTM (362 aa)) are uridylyl-removing. Residues 467–589 (VDEHTLFLIH…VGDERRLNHL (123 aa)) enclose the HD domain. ACT domains are found at residues 711 to 786 (EVFI…LTQP) and 822 to 892 (VMEL…YLER).

This sequence belongs to the GlnD family. Requires Mg(2+) as cofactor.

It catalyses the reaction [protein-PII]-L-tyrosine + UTP = [protein-PII]-uridylyl-L-tyrosine + diphosphate. The enzyme catalyses [protein-PII]-uridylyl-L-tyrosine + H2O = [protein-PII]-L-tyrosine + UMP + H(+). Uridylyltransferase (UTase) activity is inhibited by glutamine, while glutamine activates uridylyl-removing (UR) activity. In terms of biological role, modifies, by uridylylation and deuridylylation, the PII regulatory proteins (GlnB and homologs), in response to the nitrogen status of the cell that GlnD senses through the glutamine level. Under low glutamine levels, catalyzes the conversion of the PII proteins and UTP to PII-UMP and PPi, while under higher glutamine levels, GlnD hydrolyzes PII-UMP to PII and UMP (deuridylylation). Thus, controls uridylylation state and activity of the PII proteins, and plays an important role in the regulation of nitrogen assimilation and metabolism. This Nitrosococcus oceani (strain ATCC 19707 / BCRC 17464 / JCM 30415 / NCIMB 11848 / C-107) protein is Bifunctional uridylyltransferase/uridylyl-removing enzyme.